The sequence spans 280 residues: MSNTYQKRKASKEYGLYNQCKKLNDDELFRLLDDHNSLKRISSARVLQLRGGQDAVRLAIEFCSDKNYIRRDIGAFILGQIKICKKCEDNVFNILNNMALNDKSACVRATAIESTAQRCKKNPIYSPKIVEQSQITAFDKSTNVRRATAFAISVINDKATIPLLINLLKDPNGDVRNWAAFAININKYDNSDIRDCFVEMLQDKNEEVRIEAIIGLSYRKDKRVLSVLCDELKKNTVYDDIIEAAGELGDKTLLPVLDTMLYKFDDNEIITSAIDKLKRS.

The sequence is that of Protein YibA (yibA) from Escherichia coli O157:H7.